The following is a 1736-amino-acid chain: Centrosomal protein of 152 kDa (1736 aa).

The tract at residues Met-1 to Gly-60 is interaction with PLK4. Residues Met-1–Glu-127 are disordered. Composition is skewed to basic and acidic residues over residues Arg-61 to Pro-82 and Glu-94 to Leu-105. Coiled-coil stretches lie at residues Ile-228 to Gly-481, His-552 to Asp-651, Leu-692 to Gln-776, Ala-835 to Lys-868, Asn-950 to Asp-1075, and Gly-1205 to Arg-1315. The tract at residues Phe-571 to Thr-592 is disordered. Residues Lys-575 to Thr-592 are compositionally biased toward basic and acidic residues. Residue Thr-1277 is modified to Phosphothreonine. 4 disordered regions span residues Gly-1416–Ala-1479, Glu-1543–Pro-1562, Gly-1574–Thr-1614, and Gln-1677–Glu-1736. A compositionally biased stretch (basic and acidic residues) spans Arg-1462–Arg-1473. Polar residues-rich tracts occupy residues Pro-1576–Ser-1595 and Pro-1603–Thr-1614. The residue at position 1714 (Lys-1714) is an N6-acetyllysine.

It belongs to the CEP152 family. Interacts (via N-terminus) with PLK4; the interaction is mutally exclusive with a PLK4:CEP192 interaction. Interacts (via C-terminus) with CPAP (via-N-terminus). Interacts with CINP. Interacts with CDK5RAP2, WDR62, CEP63 and CEP131. CEP63, CDK5RAP2, CEP152, WDR62 are proposed to form a stepwise assembled complex at the centrosome forming a ring near parental centrioles. Interacts with DEUP1; this interaction recruits CEP152 to the deuterosome. The interactions with CEP63 and DEUP1 are mutually exclusive. Interacts with CCDC66.

It localises to the cytoplasm. It is found in the cytoskeleton. The protein resides in the microtubule organizing center. The protein localises to the centrosome. Its subcellular location is the centriole. Functionally, necessary for centrosome duplication; the function also seems to involve CEP63, CDK5RAP2 and WDR62 through a stepwise assembled complex at the centrosome that recruits CDK2 required for centriole duplication. Acts as a molecular scaffold facilitating the interaction of PLK4 and CPAP, 2 molecules involved in centriole formation. Proposed to snatch PLK4 away from PLK4:CEP92 complexes in early G1 daughter centriole and to reposition PLK4 at the outer boundary of a newly forming CEP152 ring structure. Also plays a key role in deuterosome-mediated centriole amplification in multiciliated that can generate more than 100 centrioles. Overexpression of cep152 can drive amplification of centrioles. The polypeptide is Centrosomal protein of 152 kDa (Cep152) (Mus musculus (Mouse)).